Reading from the N-terminus, the 498-residue chain is Delta(14)-sterol reductase erg24A (498 aa).

The next 4 membrane-spanning stretches (helical) occupy residues 30–50, 91–111, 136–156, and 163–183; these read LGAF…TFLC, VTVW…FLPG, ILIL…FVVW, and YVQI…FVYA. N-linked (GlcNAc...) asparagine glycosylation is present at Asn-257. 3 consecutive transmembrane segments (helical) span residues 275–295, 302–322, and 339–359; these read IVLS…MEPA, VIMD…VPFI, and LREI…FRGA. Residues Lys-363, Arg-367, Trp-395, and 402-403 contribute to the NADP(+) site; that span reads NY. An N-linked (GlcNAc...) asparagine glycan is attached at Asn-429. Residues 444 to 464 form a helical membrane-spanning segment; that stretch reads VRGWGMIFTYFFLVYFGALLI. NADP(+) contacts are provided by residues Asp-470, 474–478, and Tyr-485; that span reads CKSKY.

Belongs to the ERG4/ERG24 family.

The protein resides in the endoplasmic reticulum membrane. It functions in the pathway steroid metabolism; ergosterol biosynthesis. Delta(14)-sterol reductase; part of the third module of ergosterol biosynthesis pathway that includes the late steps of the pathway. Catalyzes the reduction of the C14=C15 double bond within 4,4,24-trimethyl ergosta-8,14,24(28)-trienolto produce 4,4-dimethylfecosterol. The third module or late pathway involves the ergosterol synthesis itself through consecutive reactions that mainly occur in the endoplasmic reticulum (ER) membrane. Firstly, the squalene synthase erg9 catalyzes the condensation of 2 farnesyl pyrophosphate moieties to form squalene, which is the precursor of all steroids. Squalene synthase is crucial for balancing the incorporation of farnesyl diphosphate (FPP) into sterol and nonsterol isoprene synthesis. Secondly, squalene is converted into lanosterol by the consecutive action of the squalene epoxidase erg1 and the lanosterol synthase erg7. Then, the delta(24)-sterol C-methyltransferase erg6 methylates lanosterol at C-24 to produce eburicol. Eburicol is the substrate of the sterol 14-alpha demethylase encoded by cyp51A and cyp51B, to yield 4,4,24-trimethyl ergosta-8,14,24(28)-trienol. The C-14 reductase erg24 then reduces the C14=C15 double bond which leads to 4,4-dimethylfecosterol. A sequence of further demethylations at C-4, involving the C-4 demethylation complex containing the C-4 methylsterol oxidases erg25A or erg25B, the sterol-4-alpha-carboxylate 3-dehydrogenase erg26 and the 3-keto-steroid reductase erg27, leads to the production of fecosterol via 4-methylfecosterol. The C-8 sterol isomerase erg2 then catalyzes the reaction which results in unsaturation at C-7 in the B ring of sterols and thus converts fecosterol to episterol. The sterol-C5-desaturase erg3B then catalyzes the introduction of a C-5 double bond in the B ring to produce 5-dehydroepisterol. The 2 other sterol-C5-desaturases, erg3A and erg3C, seem to be less important in ergosterol biosynthesis. The C-22 sterol desaturase erg5 further converts 5-dehydroepisterol into ergosta-5,7,22,24(28)-tetraen-3beta-ol by forming the C-22(23) double bond in the sterol side chain. Finally, ergosta-5,7,22,24(28)-tetraen-3beta-ol is substrate of the C-24(28) sterol reductases erg4A and erg4B to produce ergosterol. Possible alternative sterol biosynthetic pathways might exist from fecosterol to ergosterol, depending on the activities of the erg3 isoforms. The chain is Delta(14)-sterol reductase erg24A from Aspergillus fumigatus (strain ATCC MYA-4609 / CBS 101355 / FGSC A1100 / Af293) (Neosartorya fumigata).